Here is a 139-residue protein sequence, read N- to C-terminus: uncharacterized protein (139 aa).

It localises to the mitochondrion. This is an uncharacterized protein from Marchantia polymorpha (Common liverwort).